Consider the following 356-residue polypeptide: tRNA-specific 2-thiouridylase MnmA 1 (356 aa).

ATP is bound by residues G8–S15 and M34. Catalysis depends on C103, which acts as the Nucleophile. A disulfide bridge connects residues C103 and C199. ATP is bound at residue G127. The segment at K149–Q151 is interaction with tRNA. C199 functions as the Cysteine persulfide intermediate in the catalytic mechanism. Residues R305–Y306 are interaction with tRNA.

The protein belongs to the MnmA/TRMU family.

The protein localises to the cytoplasm. The catalysed reaction is S-sulfanyl-L-cysteinyl-[protein] + uridine(34) in tRNA + AH2 + ATP = 2-thiouridine(34) in tRNA + L-cysteinyl-[protein] + A + AMP + diphosphate + H(+). Functionally, catalyzes the 2-thiolation of uridine at the wobble position (U34) of tRNA, leading to the formation of s(2)U34. This chain is tRNA-specific 2-thiouridylase MnmA 1, found in Clostridium botulinum (strain Loch Maree / Type A3).